The following is a 403-amino-acid chain: Methylthioribose-1-phosphate isomerase (403 aa).

The Proton donor role is filled by Asp-280.

The protein belongs to the eIF-2B alpha/beta/delta subunits family. MtnA subfamily.

The protein resides in the cytoplasm. The protein localises to the nucleus. It carries out the reaction 5-(methylsulfanyl)-alpha-D-ribose 1-phosphate = 5-(methylsulfanyl)-D-ribulose 1-phosphate. Its pathway is amino-acid biosynthesis; L-methionine biosynthesis via salvage pathway; L-methionine from S-methyl-5-thio-alpha-D-ribose 1-phosphate: step 1/6. Its function is as follows. Catalyzes the interconversion of methylthioribose-1-phosphate (MTR-1-P) into methylthioribulose-1-phosphate (MTRu-1-P). This Eremothecium gossypii (strain ATCC 10895 / CBS 109.51 / FGSC 9923 / NRRL Y-1056) (Yeast) protein is Methylthioribose-1-phosphate isomerase.